A 241-amino-acid polypeptide reads, in one-letter code: tRNA (guanine-N(7)-)-methyltransferase (241 aa).

Residues E71, E96, D123, and D146 each coordinate S-adenosyl-L-methionine. The active site involves D146. Substrate contacts are provided by residues K150, D182, and 219-222 (TKFE).

This sequence belongs to the class I-like SAM-binding methyltransferase superfamily. TrmB family.

The catalysed reaction is guanosine(46) in tRNA + S-adenosyl-L-methionine = N(7)-methylguanosine(46) in tRNA + S-adenosyl-L-homocysteine. Its pathway is tRNA modification; N(7)-methylguanine-tRNA biosynthesis. In terms of biological role, catalyzes the formation of N(7)-methylguanine at position 46 (m7G46) in tRNA. This chain is tRNA (guanine-N(7)-)-methyltransferase, found in Pseudoalteromonas translucida (strain TAC 125).